Consider the following 188-residue polypeptide: Large ribosomal subunit protein uL5 (188 aa).

The protein belongs to the universal ribosomal protein uL5 family. Part of the 50S ribosomal subunit; contacts the 5S rRNA and probably tRNA. Forms a bridge to the 30S subunit in the 70S ribosome.

This is one of the proteins that bind and probably mediate the attachment of the 5S RNA into the large ribosomal subunit, where it forms part of the central protuberance. In the 70S ribosome it contacts protein S13 of the 30S subunit (bridge B1b), connecting the 2 subunits; this bridge is implicated in subunit movement. May contact the P site tRNA; the 5S rRNA and some of its associated proteins might help stabilize positioning of ribosome-bound tRNAs. The chain is Large ribosomal subunit protein uL5 from Pyrococcus abyssi (strain GE5 / Orsay).